A 597-amino-acid chain; its full sequence is Integrator complex subunit 11 (597 aa).

Zn(2+) contacts are provided by His-68, His-70, Asp-72, His-73, His-157, and Asp-178. An HXHXDH motif motif is present at residues 68-73 (HFHLDH). Glu-203 is an active-site residue. His-414 contributes to the Zn(2+) binding site. Lys-462 lines the 1D-myo-inositol hexakisphosphate pocket.

It belongs to the metallo-beta-lactamase superfamily. RNA-metabolizing metallo-beta-lactamase-like family. INTS11 subfamily. Belongs to the multiprotein complex Integrator, at least composed of IntS1, IntS2, IntS3, IntS4, omd/IntS5, IntS6, defl/IntS7, IntS8, IntS9, IntS10, IntS11, IntS12, asun/IntS13, IntS14 and IntS15. The core complex associates with protein phosphatase 2A subunits mts/PP2A and Pp2A-29B, to form the Integrator-PP2A (INTAC) complex. IntS11 is part of the RNA endonuclease subcomplex, composed of IntS4, IntS9, IntS11 and inositol hexakisphosphate (InsP6). Interacts with Brat1; interaction is required for the assembly of the RNA endonuclease subcomplex and inhibits the endonuclease activity of IntS11 before formation of mature integrator complex. Zn(2+) is required as a cofactor. Expressed in neurons and glia of the larval and adult brain.

The protein localises to the nucleus. Its subcellular location is the cytoplasm. It is found in the cytosol. The RNA endonuclease activity is inhibited by Brat1 that forms hyrogen bond and hydrophobic interactions with the active site. In terms of biological role, RNA endonuclease component of the integrator complex, a multiprotein complex that terminates RNA polymerase II (Pol II) transcription in the promoter-proximal region of genes. The integrator complex provides a quality checkpoint during transcription elongation by driving premature transcription termination of transcripts that are unfavorably configured for transcriptional elongation: the complex terminates transcription by (1) catalyzing dephosphorylation of the C-terminal domain (CTD) of Pol II subunit Polr2A/Rbp1 and Spt5, and (2) degrading the exiting nascent RNA transcript via endonuclease activity. The integrator complex is also involved in the 3'-end processing of the U7 snRNA, and also the spliceosomal snRNAs U1, U2, U4 and U5. Within the integrator complex, IntS11 constitutes the RNA endonuclease subunit that degrades exiting nascent RNA transcripts. The polypeptide is Integrator complex subunit 11 (Drosophila melanogaster (Fruit fly)).